We begin with the raw amino-acid sequence, 122 residues long: Large ribosomal subunit protein uL14 (122 aa).

This sequence belongs to the universal ribosomal protein uL14 family. As to quaternary structure, part of the 50S ribosomal subunit. Forms a cluster with proteins L3 and L19. In the 70S ribosome, L14 and L19 interact and together make contacts with the 16S rRNA in bridges B5 and B8.

Functionally, binds to 23S rRNA. Forms part of two intersubunit bridges in the 70S ribosome. The polypeptide is Large ribosomal subunit protein uL14 (Enterococcus faecalis (strain ATCC 700802 / V583)).